The sequence spans 383 residues: uncharacterized protein (383 aa).

Belongs to the peptidase M20 family.

This is an uncharacterized protein from Staphylococcus aureus (strain MRSA252).